Reading from the N-terminus, the 134-residue chain is RxLR effector protein Avh238 (134 aa).

The N-terminal stretch at 1–21 (MRGVFFVAVAVAIFARSSAEA) is a signal peptide. Residues 44–68 (RFLRVADPEDDDLAAPADDGKTEER) carry the RxLR-dEER motif. The tract at residues 49-70 (ADPEDDDLAAPADDGKTEERAP) is disordered. The span at 61-70 (DDGKTEERAP) shows a compositional bias: basic and acidic residues.

The protein belongs to the RxLR effector family. In terms of assembly, interacts with host 1-aminocyclopropane-1-carboxylate synthases ACS1, ACS2, ACS3, ACS10 and ACS12.

It is found in the secreted. It localises to the host cytoplasm. The protein localises to the host nucleus. Effector that suppresses plant defense responses during the early stages of pathogen infection. Suppresses cell death induced by effectors and PAMPs in plant hosts. Is able to induced cell death in tomato, tobacco, eggplant, and potato, but not in A.thaliana. Interacts with and destabilizes host 1-aminocyclopropane-1-carboxylate synthases. By suppressing type2 ACS-catalyzed ethylene biosynthesis, Avh238 facilitates Phytophthora infection. The sequence is that of RxLR effector protein Avh238 (Avh238) from Phytophthora sojae (strain P6497) (Soybean stem and root rot agent).